A 292-amino-acid chain; its full sequence is UDP-N-acetylenolpyruvoylglucosamine reductase (292 aa).

In terms of domain architecture, FAD-binding PCMH-type spans 27–188 (KIGGPVRLFI…LRVGFRIIKG (162 aa)). The active site involves Arg166. The active-site Proton donor is Ser217. Glu288 is a catalytic residue.

This sequence belongs to the MurB family. Requires FAD as cofactor.

It is found in the cytoplasm. The enzyme catalyses UDP-N-acetyl-alpha-D-muramate + NADP(+) = UDP-N-acetyl-3-O-(1-carboxyvinyl)-alpha-D-glucosamine + NADPH + H(+). The protein operates within cell wall biogenesis; peptidoglycan biosynthesis. Its function is as follows. Cell wall formation. The polypeptide is UDP-N-acetylenolpyruvoylglucosamine reductase (Thermosipho melanesiensis (strain DSM 12029 / CIP 104789 / BI429)).